Reading from the N-terminus, the 174-residue chain is NADH-quinone oxidoreductase subunit B (174 aa).

The [4Fe-4S] cluster site is built by Cys53, Cys54, Cys118, and Cys148.

This sequence belongs to the complex I 20 kDa subunit family. NDH-1 is composed of 14 different subunits. Subunits NuoB, C, D, E, F, and G constitute the peripheral sector of the complex. [4Fe-4S] cluster serves as cofactor.

Its subcellular location is the cell inner membrane. It catalyses the reaction a quinone + NADH + 5 H(+)(in) = a quinol + NAD(+) + 4 H(+)(out). NDH-1 shuttles electrons from NADH, via FMN and iron-sulfur (Fe-S) centers, to quinones in the respiratory chain. Couples the redox reaction to proton translocation (for every two electrons transferred, four hydrogen ions are translocated across the cytoplasmic membrane), and thus conserves the redox energy in a proton gradient. This is NADH-quinone oxidoreductase subunit B from Ruegeria sp. (strain TM1040) (Silicibacter sp.).